Here is a 1082-residue protein sequence, read N- to C-terminus: Protein argonaute 1A (1082 aa).

Disordered regions lie at residues 17–148 (MMRK…ASQD) and 187–208 (GQSP…VRFP). Over residues 29 to 38 (GESSGTQQAT) the composition is skewed to polar residues. Residues 72 to 100 (GRGGGQHQGRGGRYQGRGGPTSHQPGGGP) are compositionally biased toward gly residues. A PAZ domain is found at 420–533 (PVIDFVAQLL…LPMEVCKIVE (114 aa)). The region spanning 709–1030 (LLIAILPDNN…AAFRARFYME (322 aa)) is the Piwi domain. Residues 1036–1065 (SGSMASGAHTRGGGPLPGARSTKPAGNVAV) are disordered.

This sequence belongs to the argonaute family. Ago subfamily.

Its function is as follows. Probably involved in the RNA silencing pathway. May bind to short RNAs such as microRNAs (miRNAs) or short interfering RNAs (siRNAs), and represses the translation of mRNAs which are complementary to them. This Oryza sativa subsp. japonica (Rice) protein is Protein argonaute 1A (AGO1A).